Consider the following 113-residue polypeptide: Large ribosomal subunit protein uL22 (113 aa).

It belongs to the universal ribosomal protein uL22 family. In terms of assembly, part of the 50S ribosomal subunit.

Its function is as follows. This protein binds specifically to 23S rRNA; its binding is stimulated by other ribosomal proteins, e.g. L4, L17, and L20. It is important during the early stages of 50S assembly. It makes multiple contacts with different domains of the 23S rRNA in the assembled 50S subunit and ribosome. In terms of biological role, the globular domain of the protein is located near the polypeptide exit tunnel on the outside of the subunit, while an extended beta-hairpin is found that lines the wall of the exit tunnel in the center of the 70S ribosome. This is Large ribosomal subunit protein uL22 from Chloroflexus aggregans (strain MD-66 / DSM 9485).